Consider the following 425-residue polypeptide: UPF0229 protein SG1344 (425 aa).

The segment at 49–109 (GESVSIPNTD…GQGSVSQDGE (61 aa)) is disordered. Residues 50–59 (ESVSIPNTDI) are compositionally biased toward polar residues. The span at 77–90 (PGNDHFVQNDRIER) shows a compositional bias: basic and acidic residues.

The protein belongs to the UPF0229 family.

This is UPF0229 protein SG1344 from Sodalis glossinidius (strain morsitans).